We begin with the raw amino-acid sequence, 271 residues long: Orotidine 5'-phosphate decarboxylase (271 aa).

Residue lysine 97 is the Proton donor of the active site.

The protein belongs to the OMP decarboxylase family. Type 2 subfamily.

The enzyme catalyses orotidine 5'-phosphate + H(+) = UMP + CO2. It functions in the pathway pyrimidine metabolism; UMP biosynthesis via de novo pathway; UMP from orotate: step 2/2. The sequence is that of Orotidine 5'-phosphate decarboxylase from Leptospira borgpetersenii serovar Hardjo-bovis (strain L550).